Reading from the N-terminus, the 155-residue chain is Ribosomal RNA large subunit methyltransferase H (155 aa).

S-adenosyl-L-methionine-binding positions include Leu-72, Gly-103, and 122–127 (LSDLTL).

This sequence belongs to the RNA methyltransferase RlmH family. As to quaternary structure, homodimer.

The protein localises to the cytoplasm. It catalyses the reaction pseudouridine(1915) in 23S rRNA + S-adenosyl-L-methionine = N(3)-methylpseudouridine(1915) in 23S rRNA + S-adenosyl-L-homocysteine + H(+). In terms of biological role, specifically methylates the pseudouridine at position 1915 (m3Psi1915) in 23S rRNA. This chain is Ribosomal RNA large subunit methyltransferase H, found in Verminephrobacter eiseniae (strain EF01-2).